We begin with the raw amino-acid sequence, 402 residues long: NAD-dependent protein deacetylase sirtuin-7 (402 aa).

Disordered stretches follow at residues 1-25 (MAAG…REEQ) and 59-78 (VTEL…RQEE). The segment covering 9 to 25 (RSERKAAERVRRLREEQ) has biased composition (basic and acidic residues). The Deacetylase sirtuin-type domain occupies 83–330 (PEELRRKVRE…RLLMDELGLE (248 aa)). Residues 108–127 (GAGI…NGVW) and 168–171 (QNCD) contribute to the NAD(+) site. The Proton acceptor role is filled by histidine 188. Zn(2+)-binding residues include cysteine 196, cysteine 199, cysteine 226, and cysteine 229. NAD(+)-binding positions include 269–271 (GSS), 298–300 (NLQ), and cysteine 316. A disordered region spans residues 355–385 (SHSRKSLCRSREEPPPGDQSAPLASATPILG). At arginine 390 the chain carries Asymmetric dimethylarginine; alternate. The residue at position 390 (arginine 390) is an Omega-N-methylarginine; alternate.

Belongs to the sirtuin family. Class IV subfamily. In terms of assembly, interacts with UBTF and the RNA polymerase I complex. Interacts with components of the B-WICH complex, such as MYBBP1A, SMARCA5/SNF2H and BAZ1B/WSTF. Interacts with ELK4, leading to stabilization at target promoters for H3K18Ac deacetylation. Interacts with histone H2A and/or histone H2B. Interacts with DNMT1. Interacts with SIRT1. Zn(2+) is required as a cofactor. Phosphorylated during mitosis. In terms of processing, methylation at Arg-390 by PRMT6 inhibits the H3K18Ac histone deacetylase activity, promoting mitochondria biogenesis and maintaining mitochondria respiration. Post-translationally, ubiquitinated via 'Lys-63'-linked ubiquitin chains. Deubiquitinated by USP7, inhibiting the H3K18Ac histone deacetylase activity and regulating gluconeogenesis. Ubiquitinated by E3 ubiquitin-protein ligase complex containing FBXO7; leading to proteasomal degradation.

The protein localises to the nucleus. The protein resides in the nucleolus. It localises to the nucleoplasm. Its subcellular location is the chromosome. It is found in the cytoplasm. It catalyses the reaction N(6)-acetyl-L-lysyl-[protein] + NAD(+) + H2O = 2''-O-acetyl-ADP-D-ribose + nicotinamide + L-lysyl-[protein]. The catalysed reaction is N(6)-glutaryl-L-lysyl-[protein] + NAD(+) + H2O = 2''-O-glutaryl-ADP-D-ribose + nicotinamide + L-lysyl-[protein]. The enzyme catalyses N(6)-succinyl-L-lysyl-[protein] + NAD(+) + H2O = 2''-O-succinyl-ADP-D-ribose + nicotinamide + L-lysyl-[protein]. It carries out the reaction N(6)-propanoyl-L-lysyl-[protein] + NAD(+) + H2O = 3''-O-propanoyl-ADP-D-ribose + nicotinamide + L-lysyl-[protein]. It catalyses the reaction N(6)-decanoyl-L-lysyl-[protein] + NAD(+) + H2O = 2''-O-decanoyl-ADP-D-ribose + nicotinamide + L-lysyl-[protein]. Its activity is regulated as follows. NAD-dependent protein-lysine deacetylase and deacylase activities are activated by nucleic acids. Histone deacetylase activity is activated by DNA. Protein-lysine deacylase activity is activated by RNA. H3K18Ac histone deacetylase activity is inhibited by methylation at Arg-390. H3K18Ac histone deacetylase activity is inhibited by deubiquitination by USP7. Functionally, NAD-dependent protein-lysine deacylase that can act both as a deacetylase or deacylase (desuccinylase, depropionylase, deglutarylase and dedecanoylase), depending on the context. Specifically mediates deacetylation of histone H3 at 'Lys-18' (H3K18Ac). In contrast to other histone deacetylases, displays strong preference for a specific histone mark, H3K18Ac, directly linked to control of gene expression. H3K18Ac is mainly present around the transcription start site of genes and has been linked to activation of nuclear hormone receptors; SIRT7 thereby acts as a transcription repressor. Moreover, H3K18 hypoacetylation has been reported as a marker of malignancy in various cancers and seems to maintain the transformed phenotype of cancer cells. Also able to mediate deacetylation of histone H3 at 'Lys-36' (H3K36Ac) in the context of nucleosomes. Also mediates deacetylation of non-histone proteins, such as ATM, CDK9, DDX21, DDB1, FBL, FKBP5/FKBP51, GABPB1, RAN, RRP9/U3-55K and POLR1E/PAF53. Enriched in nucleolus where it stimulates transcription activity of the RNA polymerase I complex. Acts by mediating the deacetylation of the RNA polymerase I subunit POLR1E/PAF53, thereby promoting the association of RNA polymerase I with the rDNA promoter region and coding region. In response to metabolic stress, SIRT7 is released from nucleoli leading to hyperacetylation of POLR1E/PAF53 and decreased RNA polymerase I transcription. Required to restore the transcription of ribosomal RNA (rRNA) at the exit from mitosis. Promotes pre-ribosomal RNA (pre-rRNA) cleavage at the 5'-terminal processing site by mediating deacetylation of RRP9/U3-55K, a core subunit of the U3 snoRNP complex. Mediates 'Lys-37' deacetylation of Ran, thereby regulating the nuclear export of NF-kappa-B subunit RELA/p65. Acts as a regulator of DNA damage repair by mediating deacetylation of ATM during the late stages of DNA damage response, promoting ATM dephosphorylation and deactivation. Suppresses the activity of the DCX (DDB1-CUL4-X-box) E3 ubiquitin-protein ligase complexes by mediating deacetylation of DDB1, which prevents the interaction between DDB1 and CUL4 (CUL4A or CUL4B). Activates RNA polymerase II transcription by mediating deacetylation of CDK9, thereby promoting 'Ser-2' phosphorylation of the C-terminal domain (CTD) of RNA polymerase II. Deacetylates FBL, promoting histone-glutamine methyltransferase activity of FBL. Acts as a regulator of mitochondrial function by catalyzing deacetylation of GABPB1. Regulates Akt/AKT1 activity by mediating deacetylation of FKBP5/FKBP51. Required to prevent R-loop-associated DNA damage and transcription-associated genomic instability by mediating deacetylation and subsequent activation of DDX21, thereby overcoming R-loop-mediated stalling of RNA polymerases. In addition to protein deacetylase activity, also acts as a protein-lysine deacylase. Acts as a protein depropionylase by mediating depropionylation of Osterix (SP7), thereby regulating bone formation by osteoblasts. Acts as a histone deglutarylase by mediating deglutarylation of histone H4 on 'Lys-91' (H4K91glu); a mark that destabilizes nucleosomes by promoting dissociation of the H2A-H2B dimers from nucleosomes. Acts as a histone desuccinylase: in response to DNA damage, recruited to DNA double-strand breaks (DSBs) and catalyzes desuccinylation of histone H3 on 'Lys-122' (H3K122succ), thereby promoting chromatin condensation and DSB repair. Also promotes DSB repair by promoting H3K18Ac deacetylation, regulating non-homologous end joining (NHEJ). Along with its role in DNA repair, required for chromosome synapsis during prophase I of female meiosis by catalyzing H3K18Ac deacetylation. Involved in transcriptional repression of LINE-1 retrotransposon via H3K18Ac deacetylation, and promotes their association with the nuclear lamina. Required to stabilize ribosomal DNA (rDNA) heterochromatin and prevent cellular senescence induced by rDNA instability. Acts as a negative regulator of SIRT1 by preventing autodeacetylation of SIRT1, restricting SIRT1 deacetylase activity. This is NAD-dependent protein deacetylase sirtuin-7 from Rattus norvegicus (Rat).